The chain runs to 786 residues: Protein SEY1 (786 aa).

Topologically, residues 1-684 (MSDLKEAIQL…KRSIVNTTER (684 aa)) are cytoplasmic. In terms of domain architecture, GB1/RHD3-type G spans 35 to 262 (GVKYHVISVF…QDASFFKDEY (228 aa)). 45–52 (GSQSSGKS) provides a ligand contact to GTP. Positions 355-375 (KKVYEERRDDLIKQLNTIIDE) form a coiled coil. Residues 685–705 (IPLYMYALVVALGWGRIITIL) form a helical membrane-spanning segment. The Lumenal portion of the chain corresponds to 706-708 (RNP). A helical membrane pass occupies residues 709-729 (ATIILSIIVLAGAYFVHKLNL). At 730-786 (WGPLLQFANQATGQATAVLKQTVRSLVVDEEPKRKILVEPHESEGVDKEPSKNDQHL) the chain is on the cytoplasmic side. The tract at residues 765-786 (ILVEPHESEGVDKEPSKNDQHL) is disordered.

It belongs to the TRAFAC class dynamin-like GTPase superfamily. GB1/RHD3 GTPase family. RHD3 subfamily.

Its subcellular location is the endoplasmic reticulum membrane. Its function is as follows. Cooperates with the reticulon proteins and tubule-shaping DP1 family proteins to generate and maintain the structure of the tubular endoplasmic reticulum network. Has GTPase activity, which is required for its function in ER organization. The protein is Protein SEY1 of Kluyveromyces lactis (strain ATCC 8585 / CBS 2359 / DSM 70799 / NBRC 1267 / NRRL Y-1140 / WM37) (Yeast).